Here is a 393-residue protein sequence, read N- to C-terminus: Ribonuclease D (393 aa).

Residues 14–181 (LITTTEDLTG…VYQLLLERLE (168 aa)) enclose the 3'-5' exonuclease domain. Residues 219–300 (NRRMLGVLRA…AAARALPDGA (82 aa)) enclose the HRDC domain.

It belongs to the RNase D family. It depends on a divalent metal cation as a cofactor.

The protein resides in the cytoplasm. The catalysed reaction is Exonucleolytic cleavage that removes extra residues from the 3'-terminus of tRNA to produce 5'-mononucleotides.. Its function is as follows. Exonuclease involved in the 3' processing of various precursor tRNAs. Initiates hydrolysis at the 3'-terminus of an RNA molecule and releases 5'-mononucleotides. The protein is Ribonuclease D of Gluconacetobacter diazotrophicus (strain ATCC 49037 / DSM 5601 / CCUG 37298 / CIP 103539 / LMG 7603 / PAl5).